We begin with the raw amino-acid sequence, 189 residues long: UPF0301 protein RMA_0049 (189 aa).

The protein belongs to the UPF0301 (AlgH) family.

This Rickettsia massiliae (strain Mtu5) protein is UPF0301 protein RMA_0049.